The sequence spans 809 residues: RNA-directed RNA polymerase (809 aa).

Forms a ribonucleoprotein complex with the viral RNA. Since the viral RNA is not encapsidated, ribonucleoprotein complex formation appears to be the strategy to survive in the host as persistent virus.

The protein resides in the host mitochondrion. The catalysed reaction is RNA(n) + a ribonucleoside 5'-triphosphate = RNA(n+1) + diphosphate. Functionally, RNA-directed RNA polymerase that replicates the viral (+) and (-) genome. This is RNA-directed RNA polymerase from Cryphonectria parasitica mitovirus 1 (strain American chestnut tree/New Jersey/NB631) (CMV1).